The sequence spans 362 residues: 3-dehydroquinate synthase (362 aa).

Residues 71-76 (DGEQYK), 105-109 (GVVGD), 129-130 (TT), Lys-142, Lys-151, and 169-172 (CLKT) each bind NAD(+). Glu-184, His-247, and His-264 together coordinate Zn(2+).

Belongs to the sugar phosphate cyclases superfamily. Dehydroquinate synthase family. Co(2+) serves as cofactor. Zn(2+) is required as a cofactor. The cofactor is NAD(+).

It is found in the cytoplasm. It carries out the reaction 7-phospho-2-dehydro-3-deoxy-D-arabino-heptonate = 3-dehydroquinate + phosphate. It functions in the pathway metabolic intermediate biosynthesis; chorismate biosynthesis; chorismate from D-erythrose 4-phosphate and phosphoenolpyruvate: step 2/7. Its function is as follows. Catalyzes the conversion of 3-deoxy-D-arabino-heptulosonate 7-phosphate (DAHP) to dehydroquinate (DHQ). The chain is 3-dehydroquinate synthase from Escherichia coli O6:K15:H31 (strain 536 / UPEC).